Reading from the N-terminus, the 265-residue chain is MKESIYYNEENEIQISQGNCFPEELGHNPWRQPQSTARVIYLKVKDPIDTTQLLEITEIENPNYVLQAIQLAAAFQDALVPTETEFGEAIRFSMPKGLEVAKTIQPKGAVVAYTDQTLSQSNNQVSVMIDRVISVLKTVMGVALSGSIITQLTAAITDTFTNLNTQKDSAWVFWGKETSHQTNYTYNVMFAIQNETTGRVMMCVPIGFEIRVFTDKRTVLFLTTKDYANYSVNIQTLRFAQPLIDSRALSINDLSEALRSSKYLY.

This sequence belongs to the cyt1/cyt2 endotoxin family. In terms of processing, active after proteolytic processing.

Functionally, kills the larvae of dipteran insects by making pores in the epithelial cell membrane of the insect midgut. In Bacillus thuringiensis subsp. neoleoensis, this protein is Type-1Ba cytolytic delta-endotoxin (cyt1Ba1).